The primary structure comprises 104 residues: uncharacterized protein (104 aa).

The next 2 helical transmembrane spans lie at 26 to 46 (IGTGIIGVIGGILVVKGFTFF) and 70 to 90 (GLLGGIIGIATGFSITIIIAI).

It is found in the membrane. This is an uncharacterized protein from Acanthamoeba polyphaga mimivirus (APMV).